The following is a 134-amino-acid chain: Small ribosomal subunit protein uS9 (134 aa).

The disordered stretch occupies residues 97-134 (ENRQDLKSCGFLTRDPRKKERKKYGHKKARKSFQFSKR). Basic residues predominate over residues 115-134 (KERKKYGHKKARKSFQFSKR).

It belongs to the universal ribosomal protein uS9 family.

The chain is Small ribosomal subunit protein uS9 (rpsI) from Chlamydia pneumoniae (Chlamydophila pneumoniae).